A 350-amino-acid polypeptide reads, in one-letter code: Biotin synthase (350 aa).

A Radical SAM core domain is found at 41–265 (NEVQISRLLS…VMPLSRVRLS (225 aa)). Residues Cys-56, Cys-60, and Cys-63 each contribute to the [4Fe-4S] cluster site. 4 residues coordinate [2Fe-2S] cluster: Cys-100, Cys-131, Cys-191, and Arg-263.

It belongs to the radical SAM superfamily. Biotin synthase family. Homodimer. [4Fe-4S] cluster serves as cofactor. Requires [2Fe-2S] cluster as cofactor.

The enzyme catalyses (4R,5S)-dethiobiotin + (sulfur carrier)-SH + 2 reduced [2Fe-2S]-[ferredoxin] + 2 S-adenosyl-L-methionine = (sulfur carrier)-H + biotin + 2 5'-deoxyadenosine + 2 L-methionine + 2 oxidized [2Fe-2S]-[ferredoxin]. It functions in the pathway cofactor biosynthesis; biotin biosynthesis; biotin from 7,8-diaminononanoate: step 2/2. In terms of biological role, catalyzes the conversion of dethiobiotin (DTB) to biotin by the insertion of a sulfur atom into dethiobiotin via a radical-based mechanism. The chain is Biotin synthase from Shewanella loihica (strain ATCC BAA-1088 / PV-4).